Reading from the N-terminus, the 340-residue chain is NAD-dependent epimerase/dehydratase terH (340 aa).

A helical membrane pass occupies residues 7-27 (IVPPGGLVLVTGVTGFIGSYI). Asn139 carries N-linked (GlcNAc...) asparagine glycosylation. Tyr176 serves as a coordination point for NADP(+).

It belongs to the NAD(P)-dependent epimerase/dehydratase family. Dihydroflavonol-4-reductase subfamily.

It localises to the membrane. Its function is as follows. NAD-dependent epimerase/dehydratase; part of the gene cluster that mediates the biosynthesis of terrein, a fungal metabolite with ecological, antimicrobial, antiproliferative, and antioxidative activities. The first step in the pathway is performed by the polyketide synthase terA that produces 4-hydroxy-6-methylpyranon (4-HMP), orsellinic acid (OA), and 2,3-dehydro-6-hydroxymellein (2,3-dehydro-6-HM) by condensing acetyl-CoA with two, three, or four malonyl-CoA units, respectively. 4-HMP and OA are not pathway intermediates, but are rather shunt or side products. 2,3-dehydro-6-HM is further converted to 6-hydroxymellein (6-HM) by the 6-hydroxymellein synthase terB. The monooxygenases terC and terD, the multicopper oxidase terE and the Kelch-like protein terF are then involved in the transformation of 6-HM to terrein. Even if they are co-regulated with the other terrein cluster genes, terH and terI seem to be dispensable for terrein production; whereas one or both of the 2 transporters terG and terJ are probably required for efficient secretion of metabolites. The chain is NAD-dependent epimerase/dehydratase terH from Aspergillus terreus (strain NIH 2624 / FGSC A1156).